The primary structure comprises 256 residues: Galactitol 2-dehydrogenase (256 aa).

Residues 15 to 17 (RGI), Asp-36, 59 to 60 (DV), Asn-86, Tyr-152, and Lys-156 contribute to the NAD(+) site. Tyr-152 functions as the Proton acceptor in the catalytic mechanism.

The protein belongs to the short-chain dehydrogenases/reductases (SDR) family.

It carries out the reaction galactitol + NAD(+) = keto-D-tagatose + NADH + H(+). It catalyses the reaction keto-D-fructose + NADH + H(+) = D-sorbitol + NAD(+). The protein operates within carbohydrate metabolism. Functionally, involved in galactitol catabolism. Catalyzes the oxidation of galactitol to D-tagatose. Can also catalyze the oxidation of D-sorbitol to D-fructose. In Agrobacterium fabrum (strain C58 / ATCC 33970) (Agrobacterium tumefaciens (strain C58)), this protein is Galactitol 2-dehydrogenase.